A 765-amino-acid chain; its full sequence is Spastin (765 aa).

The interval 1–94 (MVRTKNQSSS…TSGYGPRGGT (94 aa)) is disordered. At 1 to 107 (MVRTKNQSSS…KQNLYVVSFP (107 aa)) the chain is on the cytoplasmic side. The required for localization to punctate cytoplasmic foci stretch occupies residues 1–195 (MVRTKNQSSS…ALLPLEMATN (195 aa)). Positions 8–19 (SSSSSASSSTKS) are enriched in low complexity. Residues 48–58 (SSKLSSNRQRA) are compositionally biased toward polar residues. Residues 59 to 72 (TITTTTTSTTPGSS) show a composition bias toward low complexity. Positions 108–128 (IIFLFNVLRSLIYQLFCIFRY) form an intramembrane region, helical. The Cytoplasmic portion of the chain corresponds to 129–765 (LYCASTKVIY…WSQDYGDITI (637 aa)). The interval 193–765 (ATNRGGSGGY…WSQDYGDITI (573 aa)) is sufficient for interaction with microtubules and microtubule severing. The MIT domain occupies 218–293 (HRRAFEYISK…SMARDRLHFL (76 aa)). The interval 329–462 (QTNSKAAAVE…GSGSGASTPM (134 aa)) is disordered. Residues 355–364 (SGTGSSAGTS) are compositionally biased toward low complexity. 2 stretches are compositionally biased toward polar residues: residues 389-407 (NKSQ…STSV) and 428-444 (QFSS…RTPI). A required for interaction with microtubules region spans residues 446–462 (NNAASGSGSGSGASTPM). Position 530-537 (530-537 (GPPGNGKT)) interacts with ATP.

It belongs to the AAA ATPase family. Spastin subfamily. Homohexamer. The homohexamer is stabilized by ATP-binding. The homohexamer may adopt a ring conformation through which microtubules pass prior to being severed. Interacts with microtubules. Interacts with atl; may be involved in microtubule dynamics.

It is found in the membrane. Its subcellular location is the cytoplasm. It localises to the cytoskeleton. The protein localises to the microtubule organizing center. The protein resides in the centrosome. It is found in the chromosome. Its subcellular location is the lipid droplet. It carries out the reaction n ATP + n H2O + a microtubule = n ADP + n phosphate + (n+1) alpha/beta tubulin heterodimers.. Its function is as follows. ATP-dependent microtubule severing protein. Stimulates microtubule minus-end depolymerization and poleward microtubule flux in the mitotic spindle. Regulates microtubule stability in the neuromuscular junction synapse. Involved in lipid metabolism by regulating the size and distribution of lipid droplets. Involved in axon regeneration by regulating microtubule severing. The sequence is that of Spastin from Drosophila mojavensis (Fruit fly).